A 224-amino-acid polypeptide reads, in one-letter code: PKHD-type hydroxylase CYB_2270 (224 aa).

The Fe2OG dioxygenase domain maps to L78 to S176. Fe cation is bound by residues H96, D98, and H157. Residue R167 coordinates 2-oxoglutarate.

The cofactor is Fe(2+). Requires L-ascorbate as cofactor.

The chain is PKHD-type hydroxylase CYB_2270 from Synechococcus sp. (strain JA-2-3B'a(2-13)) (Cyanobacteria bacterium Yellowstone B-Prime).